Reading from the N-terminus, the 469-residue chain is Arginine biosynthesis bifunctional protein ArgJ, mitochondrial (469 aa).

Residues Thr199, Lys228, Thr239, Glu325, Asn464, and Thr469 each coordinate substrate. Thr239 functions as the Nucleophile in the catalytic mechanism.

The protein belongs to the ArgJ family. Heterodimer of an alpha and a beta chain. Post-translationally, the alpha and beta chains are autoproteolytically processed from a single precursor protein within the mitochondrion.

It is found in the mitochondrion matrix. The catalysed reaction is N(2)-acetyl-L-ornithine + L-glutamate = N-acetyl-L-glutamate + L-ornithine. It catalyses the reaction L-glutamate + acetyl-CoA = N-acetyl-L-glutamate + CoA + H(+). It participates in amino-acid biosynthesis; L-arginine biosynthesis; L-ornithine and N-acetyl-L-glutamate from L-glutamate and N(2)-acetyl-L-ornithine (cyclic): step 1/1. It functions in the pathway amino-acid biosynthesis; L-arginine biosynthesis; N(2)-acetyl-L-ornithine from L-glutamate: step 1/4. Catalyzes two activities which are involved in the cyclic version of arginine biosynthesis: the synthesis of acetylglutamate from glutamate and acetyl-CoA, and of ornithine by transacetylation between acetylornithine and glutamate. This Neurospora crassa (strain ATCC 24698 / 74-OR23-1A / CBS 708.71 / DSM 1257 / FGSC 987) protein is Arginine biosynthesis bifunctional protein ArgJ, mitochondrial.